An 88-amino-acid chain; its full sequence is Small ribosomal subunit protein uS15 (88 aa).

Belongs to the universal ribosomal protein uS15 family. As to quaternary structure, part of the 30S ribosomal subunit. Forms a bridge to the 50S subunit in the 70S ribosome, contacting the 23S rRNA.

Its function is as follows. One of the primary rRNA binding proteins, it binds directly to 16S rRNA where it helps nucleate assembly of the platform of the 30S subunit by binding and bridging several RNA helices of the 16S rRNA. In terms of biological role, forms an intersubunit bridge (bridge B4) with the 23S rRNA of the 50S subunit in the ribosome. The protein is Small ribosomal subunit protein uS15 of Metamycoplasma arthritidis (strain 158L3-1) (Mycoplasma arthritidis).